A 313-amino-acid polypeptide reads, in one-letter code: D-alanine--D-alanine ligase (313 aa).

The ATP-grasp domain occupies 108–308 (KLVWQQTGVP…YSELVVKVLS (201 aa)). ATP is bound at residue 138–193 (VAKLGLPLFVKPASEGSSVAVLKVKTADALPAALSEAATHDKIVIVEKSIEGGGEY). Residues Asp-262, Glu-275, and Asn-277 each contribute to the Mg(2+) site.

It belongs to the D-alanine--D-alanine ligase family. Mg(2+) serves as cofactor. Mn(2+) is required as a cofactor.

It is found in the cytoplasm. The catalysed reaction is 2 D-alanine + ATP = D-alanyl-D-alanine + ADP + phosphate + H(+). It participates in cell wall biogenesis; peptidoglycan biosynthesis. Functionally, cell wall formation. The chain is D-alanine--D-alanine ligase from Burkholderia vietnamiensis (strain G4 / LMG 22486) (Burkholderia cepacia (strain R1808)).